The sequence spans 400 residues: D(3) dopamine receptor (400 aa).

Over 1–32 (MASLSQLSGHLNYTCGAENSTGASQARPHAYY) the chain is Extracellular. Asparagine 12 and asparagine 19 each carry an N-linked (GlcNAc...) asparagine glycan. A helical membrane pass occupies residues 33-55 (ALSYCALILAIVFGNGLVCMAVL). Topologically, residues 56–65 (KERALQTTTN) are cytoplasmic. The helical transmembrane segment at 66-88 (YLVVSLAVADLLVATLVMPWVVY) threads the bilayer. The Extracellular segment spans residues 89–104 (LEVTGGVWNFSRICCD). Residue asparagine 97 is glycosylated (N-linked (GlcNAc...) asparagine). Residues cysteine 103 and cysteine 181 are joined by a disulfide bond. A helical transmembrane segment spans residues 105-126 (VFVTLDVMMCTASILNLCAISI). Aspartate 110 contributes to the eticlopride binding site. Residues 127 to 149 (DRYTAVVMPVHYQHGTGQSSCRR) lie on the Cytoplasmic side of the membrane. Residues 150–170 (VALMITAVWVLAFAVSCPLLF) form a helical membrane-spanning segment. Topologically, residues 171-187 (GFNTTGDPTVCSISNPD) are extracellular. Asparagine 173 is a glycosylation site (N-linked (GlcNAc...) asparagine). Residues 188 to 209 (FVIYSSVVSFYLPFGVTVLVYA) traverse the membrane as a helical segment. The Cytoplasmic segment spans residues 210–329 (RIYVVLKQRR…VPLREKKATQ (120 aa)). Residues 330 to 351 (MVAIVLGAFIVCWLPFFLTHVL) form a helical membrane-spanning segment. Eticlopride-binding residues include phenylalanine 345 and histidine 349. Topologically, residues 352 to 366 (NTHCQTCHVSPELYS) are extracellular. A disulfide bridge connects residues cysteine 355 and cysteine 358. Residues 367–386 (ATTWLGYVNSALNPVIYTTF) form a helical membrane-spanning segment. At 387–400 (NIEFRKAFLKILSC) the chain is on the cytoplasmic side.

Belongs to the G-protein coupled receptor 1 family. In terms of assembly, interacts with CLIC6. Interacts with GRK4. Interacts with PALM. Interacts with FLNA (via filamin repeat 21); increases PKA-mediated phosphorylation of FLNA. In terms of processing, phosphorylated by GRK4 (GRK4-alpha and GRK4-gamma). Palmitoylated. In terms of tissue distribution, brain.

The protein resides in the cell membrane. In terms of biological role, dopamine receptor whose activity is mediated by G proteins which inhibit adenylyl cyclase. Promotes cell proliferation. In Homo sapiens (Human), this protein is D(3) dopamine receptor.